Reading from the N-terminus, the 115-residue chain is Holo-[acyl-carrier-protein] synthase (115 aa).

2 residues coordinate Mg(2+): Asp-5 and Glu-51.

It belongs to the P-Pant transferase superfamily. AcpS family. The cofactor is Mg(2+).

It is found in the cytoplasm. The catalysed reaction is apo-[ACP] + CoA = holo-[ACP] + adenosine 3',5'-bisphosphate + H(+). Transfers the 4'-phosphopantetheine moiety from coenzyme A to a Ser of acyl-carrier-protein. The chain is Holo-[acyl-carrier-protein] synthase from Helicobacter acinonychis (strain Sheeba).